Consider the following 336-residue polypeptide: Ferredoxin--NADP reductase (336 aa).

The FAD site is built by threonine 18, glutamate 37, glutamine 45, tyrosine 50, valine 92, phenylalanine 127, aspartate 290, and serine 331.

Belongs to the ferredoxin--NADP reductase type 2 family. As to quaternary structure, homodimer. The cofactor is FAD.

The catalysed reaction is 2 reduced [2Fe-2S]-[ferredoxin] + NADP(+) + H(+) = 2 oxidized [2Fe-2S]-[ferredoxin] + NADPH. The sequence is that of Ferredoxin--NADP reductase from Symbiobacterium thermophilum (strain DSM 24528 / JCM 14929 / IAM 14863 / T).